The following is a 348-amino-acid chain: tRNA N6-adenosine threonylcarbamoyltransferase (348 aa).

Residues H118 and H122 each coordinate Fe cation. Residues 140 to 144 (LVSGG), D173, G186, D190, and N279 contribute to the substrate site. D309 is a Fe cation binding site.

The protein belongs to the KAE1 / TsaD family. Fe(2+) is required as a cofactor.

The protein resides in the cytoplasm. It carries out the reaction L-threonylcarbamoyladenylate + adenosine(37) in tRNA = N(6)-L-threonylcarbamoyladenosine(37) in tRNA + AMP + H(+). In terms of biological role, required for the formation of a threonylcarbamoyl group on adenosine at position 37 (t(6)A37) in tRNAs that read codons beginning with adenine. Is involved in the transfer of the threonylcarbamoyl moiety of threonylcarbamoyl-AMP (TC-AMP) to the N6 group of A37, together with TsaE and TsaB. TsaD likely plays a direct catalytic role in this reaction. In Lactiplantibacillus plantarum (strain ATCC BAA-793 / NCIMB 8826 / WCFS1) (Lactobacillus plantarum), this protein is tRNA N6-adenosine threonylcarbamoyltransferase.